We begin with the raw amino-acid sequence, 354 residues long: CX3C chemokine receptor 1 (354 aa).

The Extracellular segment spans residues 1 to 32; the sequence is MSTSFPELDLENFEYDDSAEACYLGDIVAFGT. Residues 33 to 60 traverse the membrane as a helical segment; the sequence is IFLSVFYALVFTFGLVGNLLVVLALTNS. At 61 to 70 the chain is on the cytoplasmic side; it reads RKPKSITDIY. The helical transmembrane segment at 71–91 threads the bilayer; it reads LLNLALSDLLFVATLPFWTHY. The Extracellular portion of the chain corresponds to 92 to 104; it reads LISHEGLHNAMCK. Cysteine 103 and cysteine 176 are oxidised to a cystine. The helical transmembrane segment at 105 to 126 threads the bilayer; it reads LTTAFFFIGFFGGIFFITVISI. The Cytoplasmic portion of the chain corresponds to 127–143; the sequence is DRYLAIVLAANSMNNRT. Residues 144-168 form a helical membrane-spanning segment; the sequence is VQHGVTISLGVWAAAILVASPQFMF. The Extracellular portion of the chain corresponds to 169–196; that stretch reads TKRKDNECLGDYPEVLQEMWPVLRNSEV. The chain crosses the membrane as a helical span at residues 197–216; it reads NILGFALPLLIMSFCYFRII. The Cytoplasmic portion of the chain corresponds to 217 to 232; it reads QTLFSCKNRKKARAVR. A helical membrane pass occupies residues 233–257; it reads LILLVVFAFFLFWTPYNIMIFLETL. Topologically, residues 258-274 are extracellular; sequence KFYNFFPSCDMKRDLRL. Residues 275–298 traverse the membrane as a helical segment; sequence ALSVTETVAFSHCCLNPFIYAFAG. Residues 299 to 354 are Cytoplasmic-facing; that stretch reads EKFRRYLGHLYRKCLAVLCGHPVHTGFSPESQRSRQDSILSSFTHYTSEGDGSLLL. At threonine 345 the chain carries Phosphothreonine.

This sequence belongs to the G-protein coupled receptor 1 family. In terms of assembly, found in a ternary complex with CX3CL1 and ITGAV:ITGB3 or ITGA4:ITGB1. In terms of processing, this protein is not N-glycosylated which is unusual for G-protein-coupled receptors. As to expression, specifically expressed in subsets of leukocytes: expressed in monocytes, subsets of T-cells and natural killer (NK) cells in the circulation, dendritic cells, as well as in microglia in the central nervous system (CNS). Expression level subdivides blood monocytes into two major functional subsets; CD14(+)CD16(-)-CX3CR1(low) inflammatory monocytes and CD14(low)CD16(+)CX3CR1(high) homeostatic monocytes. Expressed in myeloid-derived mucosal dendritic cells, which populate the entire lamina propria of the small intestine.

It is found in the cell membrane. Receptor for the C-X3-C chemokine fractalkine (CX3CL1) present on many early leukocyte cells; CX3CR1-CX3CL1 signaling exerts distinct functions in different tissue compartments, such as immune response, inflammation, cell adhesion and chemotaxis. CX3CR1-CX3CL1 signaling mediates cell migratory functions. Responsible for the recruitment of natural killer (NK) cells to inflamed tissues. Acts as a regulator of inflammation process leading to atherogenesis by mediating macrophage and monocyte recruitment to inflamed atherosclerotic plaques, promoting cell survival. Involved in airway inflammation by promoting interleukin 2-producing T helper (Th2) cell survival in inflamed lung. Involved in the migration of circulating monocytes to non-inflamed tissues, where they differentiate into macrophages and dendritic cells. Acts as a negative regulator of angiogenesis, probably by promoting macrophage chemotaxis. Plays a key role in brain microglia by regulating inflammatory response in the central nervous system (CNS) and regulating synapse maturation. Required to restrain the microglial inflammatory response in the CNS and the resulting parenchymal damage in response to pathological stimuli. Involved in brain development by participating in synaptic pruning, a natural process during which brain microglia eliminates extra synapses during postnatal development. Synaptic pruning by microglia is required to promote the maturation of circuit connectivity during brain development. Acts as an important regulator of the gut microbiota by controlling immunity to intestinal bacteria and fungi. Expressed in lamina propria dendritic cells in the small intestine, which form transepithelial dendrites capable of taking up bacteria in order to provide defense against pathogenic bacteria. Required to initiate innate and adaptive immune responses against dissemination of commensal fungi (mycobiota) component of the gut: expressed in mononuclear phagocytes (MNPs) and acts by promoting induction of antifungal IgG antibodies response to confer protection against disseminated C.albicans or C.auris infection. Also acts as a receptor for C-C motif chemokine CCL26, inducing cell chemotaxis. This chain is CX3C chemokine receptor 1, found in Mus musculus (Mouse).